The primary structure comprises 462 residues: tRNA(Ile)-lysidine synthase (462 aa).

31-36 contributes to the ATP binding site; it reads SGGRDS.

It belongs to the tRNA(Ile)-lysidine synthase family.

The protein localises to the cytoplasm. It catalyses the reaction cytidine(34) in tRNA(Ile2) + L-lysine + ATP = lysidine(34) in tRNA(Ile2) + AMP + diphosphate + H(+). Its function is as follows. Ligates lysine onto the cytidine present at position 34 of the AUA codon-specific tRNA(Ile) that contains the anticodon CAU, in an ATP-dependent manner. Cytidine is converted to lysidine, thus changing the amino acid specificity of the tRNA from methionine to isoleucine. This chain is tRNA(Ile)-lysidine synthase, found in Ralstonia nicotianae (strain ATCC BAA-1114 / GMI1000) (Ralstonia solanacearum).